The primary structure comprises 533 residues: Putative adhesin domain-containing protein LiaX (533 aa).

Positions 1-277 are binds the antibiotic daptomycin (DAP) and the antimicrobial peptide human LL-37, under physiologically relevant concentrations. Protects the OG1RF and S613 strains from LL-37-mediated killing in a concentration-dependent manner; that stretch reads MKERERVLEL…EFNYPNPQAS (277 aa). A disordered region spans residues 63-89; sequence NALEKGESEGPTVDSFEENTQDSAEKD. The stretch at 83 to 186 forms a coiled coil; it reads QDSAEKDREN…EEELKNIRKE (104 aa). The segment at 279–526 is putative adhesin region; the sequence is IDVKVANGTV…INASTTTGSI (248 aa). The tract at residues 289-526 is involved in cell membrane remodeling; it reads VFKTWDQEDV…INASTTTGSI (238 aa).

In terms of processing, may undergo proteolytic cleavage, allowing release of the N-terminal region into the extracellular environment.

The protein localises to the secreted. It localises to the cell wall. The protein resides in the cell membrane. Functionally, involved in cell membrane remodeling, perhaps acting by negative modulation of the liaFSR and liaXYZ gene clusters, thereby regulating content and localization of anionic phospholipids. Binds to the antibiotic daptomycin (DAP) and to cationic antimicrobial peptides, such as human LL-37, perhaps functioning as a sensor that activates the cell envelope stress response. This Enterococcus faecalis (strain ATCC 700802 / V583) protein is Putative adhesin domain-containing protein LiaX.